Reading from the N-terminus, the 1460-residue chain is ABC transporter C family member 5 (1460 aa).

2 disordered regions span residues 1–23 and 37–68; these read MKYN…NESE and GNNN…KKKN. Over residues 37–55 the composition is skewed to low complexity; that stretch reads GNNNNDINNNNNINNNNDS. 5 helical membrane passes run 196–216, 238–258, 320–340, 425–445, and 456–476; these read FALS…GPIF, LGYY…IFLY, LIFA…CVGW, LIVV…TVYY, and IFAA…LPYG. Positions 196 to 482 constitute an ABC transmembrane type-1 1 domain; the sequence is FALSWVHFGL…LPYGYNIYIQ (287 aa). The interval 537-567 is disordered; the sequence is IKPQTNPPPPRTTPSNDKSSPSGNNSNNEKK. Over residues 551 to 563 the composition is skewed to polar residues; the sequence is SNDKSSPSGNNSN. One can recognise an ABC transporter 1 domain in the interval 560–783; it reads NNSNNEKKEV…INSAYGNSSL (224 aa). Position 593-600 (593-600) interacts with ATP; it reads GPVGSGKS. 4 helical membrane passes run 842–862, 922–942, 1014–1034, and 1108–1128; these read MYYV…GYCI, AGEF…LIIV, ILVI…PIII, and WLGL…CIFI. The ABC transmembrane type-1 2 domain occupies 853-1166; the sequence is FLIALLGYCI…ATQQLAELET (314 aa). The ABC transporter 2 domain occupies 1210 to 1444; that stretch reads IIFENVVMSY…ENSLFNWLID (235 aa). 1244-1251 contacts ATP; it reads GRTGSGKS.

This sequence belongs to the ABC transporter superfamily. ABCC family. Conjugate transporter (TC 3.A.1.208) subfamily.

The protein localises to the membrane. The polypeptide is ABC transporter C family member 5 (abcC5) (Dictyostelium discoideum (Social amoeba)).